A 164-amino-acid chain; its full sequence is Protein-export protein SecB (164 aa).

Belongs to the SecB family. As to quaternary structure, homotetramer, a dimer of dimers. One homotetramer interacts with 1 SecA dimer.

The protein localises to the cytoplasm. Functionally, one of the proteins required for the normal export of preproteins out of the cell cytoplasm. It is a molecular chaperone that binds to a subset of precursor proteins, maintaining them in a translocation-competent state. It also specifically binds to its receptor SecA. The sequence is that of Protein-export protein SecB from Pseudomonas syringae pv. tomato (strain ATCC BAA-871 / DC3000).